We begin with the raw amino-acid sequence, 330 residues long: 5'-AMP-activated protein kinase subunit gamma-1 (330 aa).

The segment covering M1–V13 has biased composition (polar residues). The interval M1–N26 is disordered. CBS domains are found at residues P43–L103, S125–E187, and I198–V260. Residues R70, M85–D90, V130, H151–R152, and K170 contribute to the ADP site. AMP-binding positions include R70, M85–D90, V130, H151, H151–R152, K170, T200, A205, S226–A227, and S242–D245. ATP is bound by residues R70, M85–D90, V130, H151–R152, R152, and K170. The short motif at L138–E159 is the AMPK pseudosubstrate element. S242–D245 contributes to the ADP binding site. S242–D245 contacts ATP. S261 carries the post-translational modification Phosphoserine; by ULK1. Phosphothreonine; by ULK1 is present on T263. R269 serves as a coordination point for ADP. R269 contributes to the AMP binding site. R269 lines the ATP pocket. Phosphoserine; by ULK1 is present on S270. One can recognise a CBS 4 domain in the interval Y272–K329. Residues L277 and H298–R299 each bind ADP. Residues L277, H298, H298 to R299, and S314 to D317 contribute to the AMP site. ATP-binding positions include L277 and H298–R299.

Belongs to the 5'-AMP-activated protein kinase gamma subunit family. In terms of assembly, AMPK is a heterotrimer of an alpha catalytic subunit (PRKAA1 or PRKAA2), a beta (PRKAB1 or PRKAB2) and a gamma non-catalytic subunits (PRKAG1, PRKAG2 or PRKAG3). Interacts with FNIP1 and FNIP2. Post-translationally, phosphorylated by ULK1 and ULK2; leading to negatively regulate AMPK activity and suggesting the existence of a regulatory feedback loop between ULK1, ULK2 and AMPK. In terms of processing, glycosylated; O-GlcNAcylated by OGT, promoting the AMP-activated protein kinase (AMPK) activity.

AMP/ATP-binding subunit of AMP-activated protein kinase (AMPK), an energy sensor protein kinase that plays a key role in regulating cellular energy metabolism. In response to reduction of intracellular ATP levels, AMPK activates energy-producing pathways and inhibits energy-consuming processes: inhibits protein, carbohydrate and lipid biosynthesis, as well as cell growth and proliferation. AMPK acts via direct phosphorylation of metabolic enzymes, and by longer-term effects via phosphorylation of transcription regulators. Also acts as a regulator of cellular polarity by remodeling the actin cytoskeleton; probably by indirectly activating myosin. Gamma non-catalytic subunit mediates binding to AMP, ADP and ATP, leading to activate or inhibit AMPK: AMP-binding results in allosteric activation of alpha catalytic subunit (PRKAA1 or PRKAA2) both by inducing phosphorylation and preventing dephosphorylation of catalytic subunits. ADP also stimulates phosphorylation, without stimulating already phosphorylated catalytic subunit. ATP promotes dephosphorylation of catalytic subunit, rendering the AMPK enzyme inactive. This chain is 5'-AMP-activated protein kinase subunit gamma-1 (PRKAG1), found in Sus scrofa (Pig).